Here is a 248-residue protein sequence, read N- to C-terminus: Amphiregulin (248 aa).

The N-terminal stretch at 1 to 26 is a signal peptide; it reads MRTPLLPLARSVLLLLVLGSGHYAAA. Positions 27-99 are excised as a propeptide; the sequence is LELNDPSSGK…IIDDSVRVEQ (73 aa). Disordered regions lie at residues 29–48, 57–77, and 100–136; these read LNDP…SAGG, VSTI…YDYS, and VIKP…KKKK. The span at 58–70 shows a compositional bias: polar residues; sequence STISEMPSGSELS. Basic and acidic residues predominate over residues 100-116; sequence VIKPKKNKTEGEKSTEK. Asparagine 106 carries an N-linked (GlcNAc...) asparagine glycan. Residues 117–136 are compositionally biased toward basic residues; that stretch reads PKRKKKGGKNGKGRRNKKKK. Residues 135–175 enclose the EGF-like domain; the sequence is KKNPCTAKFQNFCIHGECRYIENLEVVTCNCHQDYFGERCG. 3 disulfides stabilise this stretch: cysteine 139/cysteine 152, cysteine 147/cysteine 163, and cysteine 165/cysteine 174. The chain crosses the membrane as a helical span at residues 192–215; sequence IAVVAVTIFVSAIILAAIGIGIVI. N-linked (GlcNAc...) asparagine glycosylation occurs at asparagine 241.

Belongs to the amphiregulin family. As to quaternary structure, the immature precursor interacts with CNIH.

It is found in the membrane. Ligand of the EGF receptor/EGFR. Autocrine growth factor as well as a mitogen for a broad range of target cells including astrocytes, Schwann cells and fibroblasts. This chain is Amphiregulin (Areg), found in Mus musculus (Mouse).